The sequence spans 224 residues: Adenylate kinase (224 aa).

Residue 10–15 (GSGKST) coordinates ATP. The NMP stretch occupies residues 30–59 (SSGDMIRAEIEKGSELGKELKKYLAKGELI). Residues serine 31, arginine 36, 57–59 (ELI), 83–86 (GYPR), and glutamine 90 contribute to the AMP site. Residues 124-161 (GRRICPKCGAVYHLRYRPPKVPGKCDLCGSQLIQREDD) are LID. Arginine 125 contributes to the ATP binding site. Cysteine 128 and cysteine 131 together coordinate Zn(2+). 134–135 (VY) is an ATP binding site. The Zn(2+) site is built by cysteine 148 and cysteine 151. AMP-binding residues include arginine 158 and arginine 169. Glycine 197 contributes to the ATP binding site.

It belongs to the adenylate kinase family. In terms of assembly, monomer.

Its subcellular location is the cytoplasm. The catalysed reaction is AMP + ATP = 2 ADP. Its pathway is purine metabolism; AMP biosynthesis via salvage pathway; AMP from ADP: step 1/1. Its function is as follows. Catalyzes the reversible transfer of the terminal phosphate group between ATP and AMP. Plays an important role in cellular energy homeostasis and in adenine nucleotide metabolism. The sequence is that of Adenylate kinase from Thermococcus onnurineus (strain NA1).